A 396-amino-acid chain; its full sequence is Elongation factor Tu 2 (396 aa).

The tr-type G domain maps to Lys-10 to Glu-206. The segment at Gly-19–Thr-26 is G1. Gly-19 to Thr-26 contributes to the GTP binding site. Thr-26 is a Mg(2+) binding site. Residues Gly-60–Asn-64 form a G2 region. The segment at Asp-81–Gly-84 is G3. GTP contacts are provided by residues Asp-81–His-85 and Asn-136–Asp-139. A G4 region spans residues Asn-136–Asp-139. The segment at Ser-174–Lys-176 is G5.

Belongs to the TRAFAC class translation factor GTPase superfamily. Classic translation factor GTPase family. EF-Tu/EF-1A subfamily. Monomer.

It localises to the cytoplasm. It catalyses the reaction GTP + H2O = GDP + phosphate + H(+). Its function is as follows. GTP hydrolase that promotes the GTP-dependent binding of aminoacyl-tRNA to the A-site of ribosomes during protein biosynthesis. This Acidovorax sp. (strain JS42) protein is Elongation factor Tu 2.